The following is a 63-amino-acid chain: Large ribosomal subunit protein uL30 (63 aa).

It belongs to the universal ribosomal protein uL30 family. Part of the 50S ribosomal subunit.

The protein is Large ribosomal subunit protein uL30 of Rickettsia akari (strain Hartford).